A 488-amino-acid chain; its full sequence is (Z)-2-((N-methylformamido)methylene)-5-hydroxybutyrolactone dehydrogenase (488 aa).

Residues 149–150 (WN) and 226–227 (GG) contribute to the NAD(+) site. Glutamate 248 serves as the catalytic Proton acceptor. Position 249 (leucine 249) interacts with NAD(+). The active-site Nucleophile is the cysteine 282. Glutamate 380 contributes to the NAD(+) binding site.

It belongs to the aldehyde dehydrogenase family. Homodimer.

It catalyses the reaction (Z)-2-((N-methylformamido)methylene)-5-hydroxybutanolactone + NAD(+) + H2O = (E)-2-((N-methylformamido) methylene)succinate + NADH + 3 H(+). Functionally, involved in the degradation of the pyridine ring of trigonelline (TG; N-methylnicotinate) into succinate and methylamine as carbon and nitrogen sources, respectively. Catalyzes the NAD(+)-dependent oxidation of (Z)-2-((N-methylformamido)methylene)-5-hydroxybutyrolactone (MFMB) to yield (E)-2-((N-methylformamido)methylene)succinate (MFMS). The protein is (Z)-2-((N-methylformamido)methylene)-5-hydroxybutyrolactone dehydrogenase of Acinetobacter baylyi (strain ATCC 33305 / BD413 / ADP1).